The chain runs to 676 residues: Zinc finger protein 418 (676 aa).

Residues 5 to 91 (VAFEDVAVNF…HSCEMCGAIL (87 aa)) enclose the KRAB domain. 16 C2H2-type zinc fingers span residues 82-105 (HSCEMCGAILGDILHLADHQGTHH), 230-252 (CYCWECGKSFSKYDSVSNHQRVH), 258-280 (YECGECGKSFSHKGSLVQHQRVH), 286-308 (YECGECGKSFSHKGSLVQHQRVH), 314-336 (YECGECGKSFSQNGTLIKHQRVH), 342-364 (YECEECGKCFTQKGNLIQHQRGH), 370-392 (YECEECGKCFSQKGTLTEHHRVH), 398-420 (YECGECGKSFSRKGHLRNHQRGH), 426-448 (YECGECGKSFSRKGNLIQHQRSH), 454-476 (YECRECRKLFRGKSHLIEHQRVH), 482-504 (YECNECGKSFQDSSGFRVHQRVH), 510-532 (FECSECGKSFPQSCSLLRHRRVH), 538-560 (YECGECGKSFHQSSSLLRHQKTH), 591-613 (YECRECGKTFTRRSAHFKHQRLH), 619-641 (YECSECGKSFAETFSLTEHRRVH), and 647-669 (YECSECGKSFHRSSSLLRHQRVH).

The protein belongs to the krueppel C2H2-type zinc-finger protein family. In terms of tissue distribution, highly expressed in heart.

It is found in the nucleus. Its function is as follows. Transcriptional repressor. May play a role as regulator of the ubiquitin-proteasome system and autophagy-lysosomal pathway. This is Zinc finger protein 418 (ZNF418) from Homo sapiens (Human).